A 118-amino-acid polypeptide reads, in one-letter code: UPF0342 protein LCK_01004 (118 aa).

This sequence belongs to the UPF0342 family.

In Leuconostoc citreum (strain KM20), this protein is UPF0342 protein LCK_01004.